Consider the following 894-residue polypeptide: Alanine--tRNA ligase (894 aa).

Zn(2+) is bound by residues His-569, His-573, Cys-683, and His-687.

This sequence belongs to the class-II aminoacyl-tRNA synthetase family. It depends on Zn(2+) as a cofactor.

The protein resides in the cytoplasm. It catalyses the reaction tRNA(Ala) + L-alanine + ATP = L-alanyl-tRNA(Ala) + AMP + diphosphate. Catalyzes the attachment of alanine to tRNA(Ala) in a two-step reaction: alanine is first activated by ATP to form Ala-AMP and then transferred to the acceptor end of tRNA(Ala). Also edits incorrectly charged Ser-tRNA(Ala) and Gly-tRNA(Ala) via its editing domain. This chain is Alanine--tRNA ligase, found in Chloroflexus aurantiacus (strain ATCC 29366 / DSM 635 / J-10-fl).